A 640-amino-acid polypeptide reads, in one-letter code: Threonine--tRNA ligase (640 aa).

Residues 1–61 (MPTITLPDGS…DSDATLQIIT (61 aa)) enclose the TGS domain. Positions 242 to 533 (DHRKIGKRLG…LIEHYEGAFP (292 aa)) are catalytic. Residues Cys333, His384, and His510 each coordinate Zn(2+).

Belongs to the class-II aminoacyl-tRNA synthetase family. Homodimer. It depends on Zn(2+) as a cofactor.

It is found in the cytoplasm. The enzyme catalyses tRNA(Thr) + L-threonine + ATP = L-threonyl-tRNA(Thr) + AMP + diphosphate + H(+). Catalyzes the attachment of threonine to tRNA(Thr) in a two-step reaction: L-threonine is first activated by ATP to form Thr-AMP and then transferred to the acceptor end of tRNA(Thr). Also edits incorrectly charged L-seryl-tRNA(Thr). The chain is Threonine--tRNA ligase from Pseudomonas fluorescens (strain Pf0-1).